A 199-amino-acid polypeptide reads, in one-letter code: N-(5'-phosphoribosyl)anthranilate isomerase (199 aa).

It belongs to the TrpF family.

The catalysed reaction is N-(5-phospho-beta-D-ribosyl)anthranilate = 1-(2-carboxyphenylamino)-1-deoxy-D-ribulose 5-phosphate. It functions in the pathway amino-acid biosynthesis; L-tryptophan biosynthesis; L-tryptophan from chorismate: step 3/5. This Lacticaseibacillus casei (strain BL23) (Lactobacillus casei) protein is N-(5'-phosphoribosyl)anthranilate isomerase.